A 515-amino-acid chain; its full sequence is Maturase K (515 aa).

This sequence belongs to the intron maturase 2 family. MatK subfamily.

It localises to the plastid. The protein localises to the chloroplast. Its function is as follows. Usually encoded in the trnK tRNA gene intron. Probably assists in splicing its own and other chloroplast group II introns. The sequence is that of Maturase K from Pinus tabuliformis (Chinese red pine).